The following is a 2209-amino-acid chain: RNA-directed RNA polymerase L (2209 aa).

The interval 26 to 284 is endonuclease; the sequence is KVTFLSQVHP…AHLDSDVSSC (259 aa). 3 residues coordinate Mn(2+): Glu51, Asp89, and Glu102. The active site involves Lys115. One can recognise a RdRp catalytic domain in the interval 1172-1369; the sequence is CDMKMAVNNG…FLSSKLNKFV (198 aa). Residue Asp1330 coordinates Mg(2+).

It belongs to the Bunyavirales RNA polymerase family. Homomultimer; the oligomeric structure is essential for the polymerase activity. Interacts with nucleoprotein N. Interacts with protein Z; this interaction inhibits viral transcription and replication, Z partially blocks the product exit tunnel for the releasing nascent RNA product. It depends on Mn(2+) as a cofactor. Mg(2+) is required as a cofactor.

Its subcellular location is the virion. It localises to the host cytoplasm. The enzyme catalyses RNA(n) + a ribonucleoside 5'-triphosphate = RNA(n+1) + diphosphate. In terms of biological role, RNA-dependent RNA polymerase, which is responsible for the replication and transcription of the viral RNA genome using antigenomic RNA as an intermediate. During transcription, synthesizes subgenomic RNAs and assures their capping by a cap-snatching mechanism, which involves the endonuclease activity cleaving the host capped pre-mRNAs. These short capped RNAs are then used as primers for viral transcription. The 3'-end of subgenomic mRNAs molecules are heterogeneous and not polyadenylated. The replicase function is to direct synthesis of antigenomic and genomic RNA which are encapsidated and non capped. As a consequence of the use of the same enzyme for both transcription and replication, these mechanisms need to be well coordinated. These processes may be regulated by proteins N and Z in a dose-dependent manner. Z protein inhibits the viral polymerase L und thus the viral transcription and RNA synthesis. This is RNA-directed RNA polymerase L from Calomys callosus (Large vesper mouse).